Reading from the N-terminus, the 295-residue chain is Replication-associated protein A (295 aa).

The CRESS-DNA virus Rep endonuclease domain maps to 12-114 (RLQTKYVFLT…DGNVITKGEF (103 aa)). The RCR-1 motif lies at 19–22 (FLTY). Glu53, His61, and His63 together coordinate a divalent metal cation. Positions 61–63 (HLH) match the RCR-2 motif. Tyr101 serves as the catalytic For DNA cleavage activity. An RCR-3 motif is present at residues 101 to 104 (YISK). Residue Asp105 participates in a divalent metal cation binding. Positions 163–175 (SANKLFPPQPEIY) are oligomerization. An LXCXE motif, interaction with host RBR1 motif is present at residues 184–188 (LQCHE). Residues 232-295 (EGLEPGSPPS…PSNSSHSGSN (64 aa)) are disordered. Over residues 267-295 (PSTSLSMMTTRPTTSSTTSPSNSSHSGSN) the composition is skewed to low complexity.

This sequence belongs to the geminiviridae Rep protein family. As to quaternary structure, homooligomer. Interacts (via LXCXE domain) with host retinoblastoma-related protein 1 (RBR1), and may thereby deregulate the host cell cycle. Part of the C- and V-complexes which are RepA-Rep-DNA complexes involved in the c-sense and v-sense transcription. The cofactor is Mg(2+). Requires Mn(2+) as cofactor.

The protein resides in the host nucleus. The protein localises to the host cytoplasm. In terms of biological role, implicated in enhancement of V-sense gene expression. Acts a an inhibitor of C-sense gene transcription. The polypeptide is Replication-associated protein A (Datura stramonium (Jimsonweed)).